The following is a 642-amino-acid chain: Threonine--tRNA ligase (642 aa).

Residues 1-61 (MPIITLPDGS…TEDAELQLIT (61 aa)) enclose the TGS domain. The interval 242 to 535 (DHRKLGKSLD…LVEHYEGKFP (294 aa)) is catalytic. Cys333, His384, and His512 together coordinate Zn(2+).

This sequence belongs to the class-II aminoacyl-tRNA synthetase family. As to quaternary structure, homodimer. Requires Zn(2+) as cofactor.

It localises to the cytoplasm. The enzyme catalyses tRNA(Thr) + L-threonine + ATP = L-threonyl-tRNA(Thr) + AMP + diphosphate + H(+). In terms of biological role, catalyzes the attachment of threonine to tRNA(Thr) in a two-step reaction: L-threonine is first activated by ATP to form Thr-AMP and then transferred to the acceptor end of tRNA(Thr). Also edits incorrectly charged L-seryl-tRNA(Thr). The polypeptide is Threonine--tRNA ligase (Hydrogenovibrio crunogenus (strain DSM 25203 / XCL-2) (Thiomicrospira crunogena)).